The sequence spans 301 residues: Cardiolipin synthase (CMP-forming) (301 aa).

A disordered region spans residues Ser-70–Gln-93. Low complexity predominate over residues Gly-71–Gln-93. The next 5 helical transmembrane spans lie at Ile-109–Ile-129, Phe-133–Ile-153, Ile-190–Val-212, Leu-250–Leu-270, and Ile-272–Gly-292.

The protein belongs to the CDP-alcohol phosphatidyltransferase class-I family. It depends on a divalent metal cation as a cofactor. As to expression, highly expressed in tissues such as heart, skeletal muscle and liver.

The protein localises to the mitochondrion inner membrane. It catalyses the reaction a CDP-1,2-diacyl-sn-glycerol + a 1,2-diacyl-sn-glycero-3-phospho-(1'-sn-glycerol) = a cardiolipin + CMP + H(+). Catalyzes the synthesis of cardiolipin (CL) (diphosphatidylglycerol) by specifically transferring a phosphatidyl group from CDP-diacylglycerol to phosphatidylglycerol (PG). CL is a key phospholipid in mitochondrial membranes and plays important roles in maintaining the functional integrity and dynamics of mitochondria under both optimal and stress conditions. In Homo sapiens (Human), this protein is Cardiolipin synthase (CMP-forming) (CRLS1).